A 565-amino-acid polypeptide reads, in one-letter code: Carboxylesterase 1D (565 aa).

Residues 1-18 (MRLYPLVWLFLAACTAWG) form the signal peptide. An N-linked (GlcNAc...) asparagine glycan is attached at Asn79. A disulfide bond links Cys87 and Cys116. The Acyl-ester intermediate role is filled by Ser221. Cys273 and Cys284 are disulfide-bonded. The active-site Charge relay system is Glu353. At Lys382 the chain carries N6-succinyllysine. The active-site Charge relay system is His466. Residue Asn489 is glycosylated (N-linked (GlcNAc...) asparagine). Positions 562–565 (HVEL) match the Prevents secretion from ER motif.

It belongs to the type-B carboxylesterase/lipase family. Homotrimer. In terms of tissue distribution, detected in liver, lung and testis, but not in kidney (at protein level).

The protein localises to the endoplasmic reticulum lumen. Its subcellular location is the cytoplasm. It is found in the cytosol. The protein resides in the lipid droplet. It localises to the microsome. It carries out the reaction all-trans-retinyl hexadecanoate + H2O = all-trans-retinol + hexadecanoate + H(+). The catalysed reaction is a carboxylic ester + H2O = an alcohol + a carboxylate + H(+). It catalyses the reaction a long-chain fatty acyl ethyl ester + H2O = a long-chain fatty acid + ethanol + H(+). Its activity is regulated as follows. FAEE-synthesizing and PNPB-hydrolyzing activities are both inhibited by DFP. In terms of biological role, major lipase in white adipose tissue. Involved in the metabolism of xenobiotics and of natural substrates. Hydrolyzes triacylglycerols and monoacylglycerols, with a preference for monoacylglycerols. The susceptibility of the substrate increases with decreasing acyl chain length of the fatty acid moiety. Catalyzes the synthesis of fatty acid ethyl esters. Hydrolyzes retinyl esters. This chain is Carboxylesterase 1D, found in Rattus norvegicus (Rat).